The chain runs to 437 residues: Cytochrome b (437 aa).

The chain crosses the membrane as a helical span at residues 45–65; sequence WIWGIVLAFTLVLQIVTGIVL. Histidine 97 and histidine 111 together coordinate heme b. The next 9 membrane-spanning stretches (helical) occupy residues 100 to 120, 129 to 149, 156 to 176, 194 to 214, 248 to 268, 298 to 318, 330 to 350, 365 to 385, and 391 to 411; these read GASL…YYGS, WIVG…GYVL, FWGA…GPSI, FFSL…IHIW, FVIK…AVVA, FLPF…VILV, FFGV…PWLD, MWFW…AMPT, and WISL…LPLL. The heme b site is built by histidine 198 and histidine 212.

It belongs to the cytochrome b family. The main subunits of complex b-c1 are: cytochrome b, cytochrome c1 and the Rieske protein. Heme b serves as cofactor.

Its subcellular location is the cell membrane. Functionally, component of the ubiquinol-cytochrome c reductase complex (complex III or cytochrome b-c1 complex), which is a respiratory chain that generates an electrochemical potential coupled to ATP synthesis. This is Cytochrome b (petB) from Rhodobacter capsulatus (strain ATCC BAA-309 / NBRC 16581 / SB1003).